The sequence spans 273 residues: uncharacterized protein (273 aa).

Residues 7 to 27 form a helical membrane-spanning segment; sequence LTLGICLVLLIILIVGYVIMT.

This sequence belongs to the staphylococcal tandem lipoprotein family.

The protein resides in the cell membrane. This is an uncharacterized protein from Staphylococcus aureus (strain MSSA476).